Here is a 337-residue protein sequence, read N- to C-terminus: Protein BIG GRAIN 1-like (337 aa).

Disordered regions lie at residues 1 to 32 (MRDM…PSFS), 120 to 163 (SAAG…RPAS), and 179 to 235 (KRPS…PSRS). The span at 137–146 (HEQPDVEKTA) shows a compositional bias: basic and acidic residues. Composition is skewed to low complexity over residues 150 to 163 (PGSA…RPAS) and 195 to 209 (PACS…SSYA).

Belongs to the BIG GRAIN 1 (BG1) plant protein family.

The protein localises to the cell membrane. In terms of biological role, involved in auxin transport. Regulator of the auxin signaling pathway. The protein is Protein BIG GRAIN 1-like of Oryza sativa subsp. japonica (Rice).